A 253-amino-acid chain; its full sequence is Large ribosomal subunit protein uL10m (253 aa).

The N-terminal 24 residues, 1-24, are a transit peptide targeting the mitochondrion; it reads MANLMQRSLPLTTTRTPVLQFLRF.

The protein belongs to the universal ribosomal protein uL10 family. Component of the mitochondrial ribosome large subunit (39S) which comprises a 16S rRNA and about 50 distinct proteins.

The protein localises to the mitochondrion. In Drosophila pseudoobscura pseudoobscura (Fruit fly), this protein is Large ribosomal subunit protein uL10m (mRpL10).